The sequence spans 189 residues: Testis-expressed protein 22 (189 aa).

A disordered region spans residues 1-120 (MDSRQQRPQR…TQSVPTPPLQ (120 aa)). Over residues 14–24 (QWQLAQEQRQQ) the composition is skewed to low complexity. Residues 70–87 (IDERRRLALQRMQERTDT) are compositionally biased toward basic and acidic residues. Over residues 103-114 (QQTETSPSTQSV) the composition is skewed to low complexity.

In terms of tissue distribution, mainly expressed in spermatocytes and spermatids in testis.

It localises to the cytoplasm. Its subcellular location is the cytoplasmic vesicle. The protein localises to the secretory vesicle. The protein resides in the acrosome. The chain is Testis-expressed protein 22 (Tex22) from Mus musculus (Mouse).